Reading from the N-terminus, the 341-residue chain is S-adenosylmethionine:tRNA ribosyltransferase-isomerase (341 aa).

It belongs to the QueA family. Monomer.

The protein localises to the cytoplasm. It carries out the reaction 7-aminomethyl-7-carbaguanosine(34) in tRNA + S-adenosyl-L-methionine = epoxyqueuosine(34) in tRNA + adenine + L-methionine + 2 H(+). The protein operates within tRNA modification; tRNA-queuosine biosynthesis. Its function is as follows. Transfers and isomerizes the ribose moiety from AdoMet to the 7-aminomethyl group of 7-deazaguanine (preQ1-tRNA) to give epoxyqueuosine (oQ-tRNA). This Clostridium botulinum (strain Langeland / NCTC 10281 / Type F) protein is S-adenosylmethionine:tRNA ribosyltransferase-isomerase.